The following is a 74-amino-acid chain: DNA-directed RNA polymerase subunit omega (74 aa).

The protein belongs to the RNA polymerase subunit omega family. The RNAP catalytic core consists of 2 alpha, 1 beta, 1 beta' and 1 omega subunit. When a sigma factor is associated with the core the holoenzyme is formed, which can initiate transcription.

It carries out the reaction RNA(n) + a ribonucleoside 5'-triphosphate = RNA(n+1) + diphosphate. In terms of biological role, promotes RNA polymerase assembly. Latches the N- and C-terminal regions of the beta' subunit thereby facilitating its interaction with the beta and alpha subunits. The protein is DNA-directed RNA polymerase subunit omega of Campylobacter jejuni subsp. jejuni serotype O:6 (strain 81116 / NCTC 11828).